A 567-amino-acid polypeptide reads, in one-letter code: Unguisins hydrolase ungD (567 aa).

The protein belongs to the peptidase S12 family.

The protein operates within secondary metabolite biosynthesis. Functionally, hydrolase; part of the gene cluster that mediates the biosynthesis of the unguisins, gamma-aminobutyric acid (GABA)-containing fungal cyclic heptapeptides with the amino acid sequence cyclo-(D-Ala1-D-Val2-L-Phe3-D-Val4-D-Ala5-D-Trp6-GABA7) for unguisin A and cyclo-(D-Ala1-D-Val2-L-Leu3-D-Val4-D-Ala5-D-Trp6-GABA7) for unguisin B. Within the pathway, the hydrolase ungD catalyzes the hydrolysis between the D-tryptophan and GABA residues of unguisins A and B to produce the corresponding linear peptides. The alanine racemase ungC catalyzes the interconversion of L-alanine and D-alanine, providing the D-alanine which is accepted by the first adenylation domain of the nonribosomal peptide synthetase (NRPS) ungA. UngA is the main enzyme within the cluster which condenses the 7 residues using its respective 7 modules. The terminal condensation domain (Ct) is involved in cyclization with D-alanine and thereby releasing of unguisins A and B. The chain is Unguisins hydrolase ungD from Aspergillus violaceofuscus (strain CBS 115571).